Consider the following 257-residue polypeptide: Imidazole glycerol phosphate synthase subunit HisF (257 aa).

Active-site residues include D11 and D130.

Belongs to the HisA/HisF family. In terms of assembly, heterodimer of HisH and HisF.

The protein localises to the cytoplasm. It catalyses the reaction 5-[(5-phospho-1-deoxy-D-ribulos-1-ylimino)methylamino]-1-(5-phospho-beta-D-ribosyl)imidazole-4-carboxamide + L-glutamine = D-erythro-1-(imidazol-4-yl)glycerol 3-phosphate + 5-amino-1-(5-phospho-beta-D-ribosyl)imidazole-4-carboxamide + L-glutamate + H(+). It participates in amino-acid biosynthesis; L-histidine biosynthesis; L-histidine from 5-phospho-alpha-D-ribose 1-diphosphate: step 5/9. IGPS catalyzes the conversion of PRFAR and glutamine to IGP, AICAR and glutamate. The HisF subunit catalyzes the cyclization activity that produces IGP and AICAR from PRFAR using the ammonia provided by the HisH subunit. The protein is Imidazole glycerol phosphate synthase subunit HisF of Prochlorococcus marinus (strain SARG / CCMP1375 / SS120).